Consider the following 566-residue polypeptide: Cytochrome c oxidase subunit 1 (566 aa).

Helical transmembrane passes span 29 to 49 (IGVL…AFTV), 97 to 117 (VMIT…ALFG), 141 to 161 (LSYW…FAPG), 189 to 209 (LAIF…INMI), 227 to 247 (LFAW…PVLA), 278 to 298 (ILWF…FGIV), and 310 to 330 (IFGY…GFVV). Position 102 (His102) interacts with Fe(II)-heme a. 2 residues coordinate Cu cation: His284 and Tyr288. A cross-link (1'-histidyl-3'-tyrosine (His-Tyr)) is located at residues 284–288 (HPEVY). Positions 333 and 334 each coordinate Cu cation. The next 2 helical transmembrane spans lie at 348 to 368 (FMMA…SWIA) and 381 to 401 (MLWA…GIVL). His419 provides a ligand contact to heme a3. The next 3 membrane-spanning stretches (helical) occupy residues 420-440 (FHYV…YFWI), 455-475 (LHFW…HFLG), and 499-519 (LGAF…FYTL). Residue His421 participates in Fe(II)-heme a binding. Residues 543 to 566 (TSPPPEHTFEQLPKREDWERAPAH) are disordered. The segment covering 549–566 (HTFEQLPKREDWERAPAH) has biased composition (basic and acidic residues).

It belongs to the heme-copper respiratory oxidase family. Cu(2+) is required as a cofactor. The cofactor is heme.

Its subcellular location is the cell membrane. It carries out the reaction 4 Fe(II)-[cytochrome c] + O2 + 8 H(+)(in) = 4 Fe(III)-[cytochrome c] + 2 H2O + 4 H(+)(out). The protein operates within energy metabolism; oxidative phosphorylation. In terms of biological role, cytochrome c oxidase is the component of the respiratory chain that catalyzes the reduction of oxygen to water. Subunits 1-3 form the functional core of the enzyme complex. Co I is the catalytic subunit of the enzyme. Electrons originating in cytochrome c are transferred via the copper A center of subunit 2 and heme a of subunit 1 to the bimetallic center formed by heme a3 and copper B. This cytochrome c oxidase shows proton pump activity across the membrane in addition to the electron transfer. The protein is Cytochrome c oxidase subunit 1 (ctaD) of Cereibacter sphaeroides (Rhodobacter sphaeroides).